Consider the following 55-residue polypeptide: ATP synthase F(0) complex subunit 8 (55 aa).

The helical transmembrane segment at 4–24 (LNPAPWFTILVFSWMIFLAII) threads the bilayer. Polar residues predominate over residues 32 to 41 (TSPNDSSPLS). The tract at residues 32 to 55 (TSPNDSSPLSTEKHKTESWDWPWQ) is disordered.

The protein belongs to the ATPase protein 8 family. In terms of assembly, component of the ATP synthase complex composed at least of ATP5F1A/subunit alpha, ATP5F1B/subunit beta, ATP5MC1/subunit c (homooctomer), MT-ATP6/subunit a, MT-ATP8/subunit 8, ATP5ME/subunit e, ATP5MF/subunit f, ATP5MG/subunit g, ATP5MK/subunit k, ATP5MJ/subunit j, ATP5F1C/subunit gamma, ATP5F1D/subunit delta, ATP5F1E/subunit epsilon, ATP5PF/subunit F6, ATP5PB/subunit b, ATP5PD/subunit d, ATP5PO/subunit OSCP. ATP synthase complex consists of a soluble F(1) head domain (subunits alpha(3) and beta(3)) - the catalytic core - and a membrane F(0) domain - the membrane proton channel (subunits c, a, 8, e, f, g, k and j). These two domains are linked by a central stalk (subunits gamma, delta, and epsilon) rotating inside the F1 region and a stationary peripheral stalk (subunits F6, b, d, and OSCP).

It localises to the mitochondrion membrane. Functionally, subunit 8, of the mitochondrial membrane ATP synthase complex (F(1)F(0) ATP synthase or Complex V) that produces ATP from ADP in the presence of a proton gradient across the membrane which is generated by electron transport complexes of the respiratory chain. ATP synthase complex consist of a soluble F(1) head domain - the catalytic core - and a membrane F(1) domain - the membrane proton channel. These two domains are linked by a central stalk rotating inside the F(1) region and a stationary peripheral stalk. During catalysis, ATP synthesis in the catalytic domain of F(1) is coupled via a rotary mechanism of the central stalk subunits to proton translocation. In vivo, can only synthesize ATP although its ATP hydrolase activity can be activated artificially in vitro. Part of the complex F(0) domain. In Formosania lacustris (Oriental stream loach), this protein is ATP synthase F(0) complex subunit 8.